A 240-amino-acid polypeptide reads, in one-letter code: UDP-2,3-diacylglucosamine hydrolase (240 aa).

Mn(2+)-binding residues include aspartate 8, histidine 10, aspartate 41, asparagine 79, and histidine 114. 79-80 contributes to the substrate binding site; sequence NR. Substrate is bound by residues aspartate 122, serine 160, asparagine 164, lysine 167, and histidine 195. Residues histidine 195 and histidine 197 each contribute to the Mn(2+) site.

The protein belongs to the LpxH family. Mn(2+) serves as cofactor.

It localises to the cell inner membrane. It carries out the reaction UDP-2-N,3-O-bis[(3R)-3-hydroxytetradecanoyl]-alpha-D-glucosamine + H2O = 2-N,3-O-bis[(3R)-3-hydroxytetradecanoyl]-alpha-D-glucosaminyl 1-phosphate + UMP + 2 H(+). It functions in the pathway glycolipid biosynthesis; lipid IV(A) biosynthesis; lipid IV(A) from (3R)-3-hydroxytetradecanoyl-[acyl-carrier-protein] and UDP-N-acetyl-alpha-D-glucosamine: step 4/6. Functionally, hydrolyzes the pyrophosphate bond of UDP-2,3-diacylglucosamine to yield 2,3-diacylglucosamine 1-phosphate (lipid X) and UMP by catalyzing the attack of water at the alpha-P atom. Involved in the biosynthesis of lipid A, a phosphorylated glycolipid that anchors the lipopolysaccharide to the outer membrane of the cell. This chain is UDP-2,3-diacylglucosamine hydrolase, found in Escherichia fergusonii (strain ATCC 35469 / DSM 13698 / CCUG 18766 / IAM 14443 / JCM 21226 / LMG 7866 / NBRC 102419 / NCTC 12128 / CDC 0568-73).